A 238-amino-acid chain; its full sequence is Expansin-like protein 5 (238 aa).

Positions 1–21 (MRINFKLILIILTSFYGIINC) are cleaved as a signal peptide. The Expansin-like EG45 domain occupies 45-145 (NGNCGFGKLT…VKVPCRVSGN (101 aa)). 2 disulfides stabilise this stretch: C48–C78 and C81–C140. An N-linked (GlcNAc...) asparagine glycan is attached at N89.

Belongs to the expansin family. Expansin A subfamily.

The protein localises to the secreted. Its function is as follows. May serve to lubricate the movement of the cellulose microfibrils during cell growth and wall extension and/or may serve to maintain the fluid state of the slug cell wall. The polypeptide is Expansin-like protein 5 (expl5) (Dictyostelium discoideum (Social amoeba)).